The chain runs to 66 residues: Photosystem II reaction center protein J (66 aa).

The segment at 1 to 27 (MSGKKSGLPDGRVPDRNPDGTPAVPWK) is disordered. Residues 37–57 (LWLVATAGGMAVMFVVGLFFY) traverse the membrane as a helical segment.

The protein belongs to the PsbJ family. In terms of assembly, PSII is composed of 1 copy each of membrane proteins PsbA, PsbB, PsbC, PsbD, PsbE, PsbF, PsbH, PsbI, PsbJ, PsbK, PsbL, PsbM, PsbT, PsbX, PsbY, PsbZ, Psb30/Ycf12, peripheral proteins PsbO, CyanoQ (PsbQ), PsbU, PsbV and a large number of cofactors. It forms dimeric complexes.

The protein resides in the cellular thylakoid membrane. Functionally, one of the components of the core complex of photosystem II (PSII). PSII is a light-driven water:plastoquinone oxidoreductase that uses light energy to abstract electrons from H(2)O, generating O(2) and a proton gradient subsequently used for ATP formation. It consists of a core antenna complex that captures photons, and an electron transfer chain that converts photonic excitation into a charge separation. This Synechococcus sp. (strain RCC307) protein is Photosystem II reaction center protein J.